A 194-amino-acid polypeptide reads, in one-letter code: Large ribosomal subunit protein eL15 (194 aa).

The disordered stretch occupies residues 160-194 (RGLTSAGKKGRGLMYKGKGTEKVRPSVRANSKKAK).

The protein belongs to the eukaryotic ribosomal protein eL15 family.

The polypeptide is Large ribosomal subunit protein eL15 (Methanococcus maripaludis (strain C7 / ATCC BAA-1331)).